The sequence spans 226 residues: Cytidylate kinase (226 aa).

10 to 18 (GPASSGKST) is an ATP binding site.

Belongs to the cytidylate kinase family. Type 1 subfamily.

It localises to the cytoplasm. It carries out the reaction CMP + ATP = CDP + ADP. The catalysed reaction is dCMP + ATP = dCDP + ADP. The sequence is that of Cytidylate kinase from Streptococcus thermophilus (strain ATCC BAA-491 / LMD-9).